Consider the following 504-residue polypeptide: Probable cytochrome P450 513E1 (504 aa).

Residues 1–21 form a helical membrane-spanning segment; that stretch reads MNLYISILILIISLIIFFKNN. Cys450 lines the heme pocket.

This sequence belongs to the cytochrome P450 family. Heme is required as a cofactor.

The protein localises to the membrane. This Dictyostelium discoideum (Social amoeba) protein is Probable cytochrome P450 513E1 (cyp513E1).